Consider the following 134-residue polypeptide: Ribosome-binding factor A (134 aa).

The protein belongs to the RbfA family. In terms of assembly, monomer. Binds 30S ribosomal subunits, but not 50S ribosomal subunits or 70S ribosomes.

Its subcellular location is the cytoplasm. One of several proteins that assist in the late maturation steps of the functional core of the 30S ribosomal subunit. Associates with free 30S ribosomal subunits (but not with 30S subunits that are part of 70S ribosomes or polysomes). Required for efficient processing of 16S rRNA. May interact with the 5'-terminal helix region of 16S rRNA. The sequence is that of Ribosome-binding factor A from Sinorhizobium medicae (strain WSM419) (Ensifer medicae).